A 116-amino-acid chain; its full sequence is uncharacterized protein (116 aa).

A helical transmembrane segment spans residues 58–78 (IIVDFKFIFQIFLILSFGFFA).

It localises to the membrane. This is an uncharacterized protein from Rickettsia prowazekii (strain Madrid E).